Consider the following 461-residue polypeptide: tRNA(Ile)-lysidine synthase (461 aa).

26–31 (SGGPDS) contacts ATP.

It belongs to the tRNA(Ile)-lysidine synthase family.

It localises to the cytoplasm. The catalysed reaction is cytidine(34) in tRNA(Ile2) + L-lysine + ATP = lysidine(34) in tRNA(Ile2) + AMP + diphosphate + H(+). Functionally, ligates lysine onto the cytidine present at position 34 of the AUA codon-specific tRNA(Ile) that contains the anticodon CAU, in an ATP-dependent manner. Cytidine is converted to lysidine, thus changing the amino acid specificity of the tRNA from methionine to isoleucine. In Clostridium acetobutylicum (strain ATCC 824 / DSM 792 / JCM 1419 / IAM 19013 / LMG 5710 / NBRC 13948 / NRRL B-527 / VKM B-1787 / 2291 / W), this protein is tRNA(Ile)-lysidine synthase.